A 508-amino-acid chain; its full sequence is Maturase K (508 aa).

Belongs to the intron maturase 2 family. MatK subfamily.

The protein localises to the plastid. The protein resides in the chloroplast. In terms of biological role, usually encoded in the trnK tRNA gene intron. Probably assists in splicing its own and other chloroplast group II introns. The chain is Maturase K from Abrus precatorius (Indian licorice).